The following is a 284-amino-acid chain: Ribosomal RNA small subunit methyltransferase A (284 aa).

Residues Asn-22, Leu-24, Gly-49, Glu-70, Asp-97, and Asn-117 each coordinate S-adenosyl-L-methionine.

The protein belongs to the class I-like SAM-binding methyltransferase superfamily. rRNA adenine N(6)-methyltransferase family. RsmA subfamily.

It localises to the cytoplasm. It catalyses the reaction adenosine(1518)/adenosine(1519) in 16S rRNA + 4 S-adenosyl-L-methionine = N(6)-dimethyladenosine(1518)/N(6)-dimethyladenosine(1519) in 16S rRNA + 4 S-adenosyl-L-homocysteine + 4 H(+). Functionally, specifically dimethylates two adjacent adenosines (A1518 and A1519) in the loop of a conserved hairpin near the 3'-end of 16S rRNA in the 30S particle. May play a critical role in biogenesis of 30S subunits. The chain is Ribosomal RNA small subunit methyltransferase A from Desulforapulum autotrophicum (strain ATCC 43914 / DSM 3382 / VKM B-1955 / HRM2) (Desulfobacterium autotrophicum).